Consider the following 1615-residue polypeptide: MMSAVMNVGKIAENGGTSQTVKSPSKSPAPNRIGRRNQETKEEKSSYTCPLCEKICTTQHQLTMHIRQHNTDTGGTDHSCSICGKSLSSASSLDRHMLVHSGERPYKCSVCGQSFTTNGNMHRHMKIHEKDPNSTASTTPPSPLKAKRLSSKRKFSQDAEMDREERTPAKKVVEDGQYGEGDRKEDDAYHCPVCFKDFFCKYALESHMETHPDNSLRCDICCITFRTHRGLLRHNAVIHKQLPRDPTGKPFIQNNPSIPAGFHDLGFTDFSCRKFPRISQVWCETNLRRCISEFHRFICETCNKAFPMLLALKLHTETHVMDQGRDKHKLQSTSLPSENPDQKAFMASLGLQYTKDIKPVKQEDDTQDEVQEMRLRALKSNLPQEPGSTGLLSLSPLEAATMGGPFSVLPPTKENIKLLSLQPFQKGFIIQPDSSIVVKPISNESAIELADIQQILKMASSAPPQISLPPLSKAPSVPVQSIFKHMPPLKPKPLVTPRTVVATSTPPPLISAQQASPGCISPSLPPPPLRLIKNSVETSSNSHLSQPGAKSSPSSQLLLQPKVEPLTQHEMKTQLEQDSIIEALLPLNMEAKIKQEVTEGDLKAIIAGAANKKAPTMRKVLYPCRFCDQVFAFSGVLRAHIRSHLGISPYQCNICDYIAADKAALIRHLRTHSGERPYICKICHYPGTVKANCERHLRKKHLKVTRKDIEKNIEYVTSNAAEMVDAFCSPDTVCKLCGEDLKHYRALRIHMRTHSGCQKKKPFECKECGTAFSAKRNCIHHILKQHLHVQEREIENYILVVDCSAQESHTDAPLLEDSTYMDCKPITPFLEPQNGFLLGTSSHVPIKLEPMGNFPMDFDEPLDFSQKSKNLSAVQVKQENLLVSSPLSFYDCSMEPIDLSIPKVLKRDNDIPGEARNQELASSVITDNAYNWQQCPLGFGANGNSEKNRAVGHPQPLKGSLHLTVPIISPALLGNSALLRPLRPKPPPQPLLPKPPVTKELPPLASIAQIISSVSSAPALLKTEAADASPKAASSSTGCDKSGNAKAKMTIVTAIQRDSNLPSDLTQACDPEPSPIADTGLTKKRGRKKGTKNKPKLSSGVDLESSGEFASIEKMLATTDTNKFSPFLQSTDNFKEESGQNGTSEDEKETPEDKLLRGKRNTYSDCPQKITCPYCPRVFSWASSLQRHMLTHTDSQADTEAPATGGEVLDLTSCEKEQPEEVSELPGSECSPQEEQKADSPPAEEDAEEKADEYEEGPEEDSVSNKSLDLNFASKLMDFKLAESDQSAGSSSQTERKHACDVCGKTFKFAGALSRHKKAHIREDRKDERSSEDESKSIQDDAGAPSMQDSGLEQEESPMDLKVVESPLDCEATGKENEESESISEGEGTERKSTEKSSDDKIPKTDEAKSTAKADKRKKVCTVCNKRFWSLQDLTRHMRSHTGERPYKCQTCERTFTLKHSLVRHQRIHQKVKNTRNHGKESDKEETQSRCGEDSENESSHSGTNPISENECDFAGVVGSHPSGTRSRKESLVGAAKDVPCEEERPSGQGATADLVEPAKSTQKQPAKDQEPRGSSELERPSGFIQDLLEMHNKKSPMNHILASADSTPQLLGVE.

Residues 1–44 (MMSAVMNVGKIAENGGTSQTVKSPSKSPAPNRIGRRNQETKEEK) form a disordered region. Residues 15 to 28 (GGTSQTVKSPSKSP) are compositionally biased toward polar residues. 3 C2H2-type zinc fingers span residues 47–69 (YTCPLCEKICTTQHQLTMHIRQH), 78–100 (HSCSICGKSLSSASSLDRHMLVH), and 106–128 (YKCSVCGQSFTTNGNMHRHMKIH). Residues 127 to 169 (IHEKDPNSTASTTPPSPLKAKRLSSKRKFSQDAEMDREERTPA) form a disordered region. Residues 145-154 (KAKRLSSKRK) show a composition bias toward basic residues. C2H2-type zinc fingers lie at residues 189-211 (YHCPVCFKDFFCKYALESHMETH), 216-239 (LRCDICCITFRTHRGLLRHNAVIH), and 297-319 (FICETCNKAFPMLLALKLHTETH). The disordered stretch occupies residues 511–556 (SAQQASPGCISPSLPPPPLRLIKNSVETSSNSHLSQPGAKSSPSSQ). Positions 535–549 (SVETSSNSHLSQPGA) are enriched in polar residues. 4 C2H2-type zinc fingers span residues 622–644 (YPCRFCDQVFAFSGVLRAHIRSH), 650–672 (YQCNICDYIAADKAALIRHLRTH), 732–754 (TVCKLCGEDLKHYRALRIHMRTH), and 763–788 (FECKECGTAFSAKRNCIHHILKQHLH). Disordered regions lie at residues 1025–1044 (AADASPKAASSSTGCDKSGN), 1058–1104 (DSNL…VDLE), and 1123–1162 (KFSPFLQSTDNFKEESGQNGTSEDEKETPEDKLLRGKRNT). Residues 1026-1036 (ADASPKAASSS) are compositionally biased toward low complexity. Residues 1082-1095 (TKKRGRKKGTKNKP) show a composition bias toward basic residues. Residues 1123-1132 (KFSPFLQSTD) show a composition bias toward polar residues. The segment at 1170–1192 (ITCPYCPRVFSWASSLQRHMLTH) adopts a C2H2-type 11 zinc-finger fold. Disordered stretches follow at residues 1214 to 1269 (CEKE…KSLD) and 1313 to 1418 (LSRH…DKRK). Positions 1242–1262 (PAEEDAEEKADEYEEGPEEDS) are enriched in acidic residues. The C2H2-type 12 zinc-finger motif lies at 1298 to 1320 (HACDVCGKTFKFAGALSRHKKAH). Composition is skewed to basic and acidic residues over residues 1321–1339 (IREDRKDERSSEDESKSIQ) and 1388–1414 (GTERKSTEKSSDDKIPKTDEAKSTAKA). 2 consecutive C2H2-type zinc fingers follow at residues 1419–1441 (KVCTVCNKRFWSLQDLTRHMRSH) and 1447–1469 (YKCQTCERTFTLKHSLVRHQRIH). Over residues 1464-1477 (RHQRIHQKVKNTRN) the composition is skewed to basic residues. The interval 1464 to 1585 (RHQRIHQKVK…SELERPSGFI (122 aa)) is disordered. Basic and acidic residues-rich tracts occupy residues 1478–1493 (HGKESDKEETQSRCGE) and 1566–1580 (PAKDQEPRGSSELER).

Belongs to the krueppel C2H2-type zinc-finger protein family. Broadly expressed, except in brain.

Its subcellular location is the nucleus. Transcription factor that binds specifically to the RAS-responsive elements (RRE) of gene promoters. The protein is Ras-responsive element-binding protein 1 (RREB1) of Gallus gallus (Chicken).